The following is a 349-amino-acid chain: Twinfilin-2-A (349 aa).

ADF-H domains lie at 4–139 (QTGI…KHVS) and 177–313 (GLSF…DEVH). Residues 321-349 (QAFAKPKGPAGKRGQKRLIKGPGENGEDS) form a disordered region.

Belongs to the actin-binding proteins ADF family. Twinfilin subfamily. In terms of assembly, interacts with G-actin; ADP-actin form and capping protein (CP).

It is found in the cytoplasm. Its subcellular location is the cytoskeleton. The protein resides in the perinuclear region. In terms of biological role, actin-binding protein involved in motile and morphological processes. Inhibits actin polymerization, likely by sequestering G-actin. The chain is Twinfilin-2-A (twf2-a) from Xenopus laevis (African clawed frog).